We begin with the raw amino-acid sequence, 87 residues long: UPF0237 protein YjhC (87 aa).

The ACT domain occupies 4 to 76; the sequence is VVTVVGADKI…EALGVNIHVQ (73 aa).

This sequence belongs to the UPF0237 family.

The sequence is that of UPF0237 protein YjhC (yjhC) from Lactococcus lactis subsp. lactis (strain IL1403) (Streptococcus lactis).